The following is a 360-amino-acid chain: DNA replication and repair protein RecF (360 aa).

30–37 contributes to the ATP binding site; it reads GHNGSGKT.

The protein belongs to the RecF family.

It localises to the cytoplasm. Its function is as follows. The RecF protein is involved in DNA metabolism; it is required for DNA replication and normal SOS inducibility. RecF binds preferentially to single-stranded, linear DNA. It also seems to bind ATP. The chain is DNA replication and repair protein RecF from Haemophilus ducreyi (strain 35000HP / ATCC 700724).